Reading from the N-terminus, the 408-residue chain is DNA primase DnaG (408 aa).

One can recognise a Toprim domain in the interval 165-243; it reads PELIIVEGRA…KIDYVARAPT (79 aa). Residues E171, D216, and D218 each contribute to the Mg(2+) site.

Belongs to the archaeal DnaG primase family. As to quaternary structure, forms a ternary complex with MCM helicase and DNA. Component of the archaeal exosome complex. Mg(2+) serves as cofactor.

The catalysed reaction is ssDNA + n NTP = ssDNA/pppN(pN)n-1 hybrid + (n-1) diphosphate.. Functionally, RNA polymerase that catalyzes the synthesis of short RNA molecules used as primers for DNA polymerase during DNA replication. Also part of the exosome, which is a complex involved in RNA degradation. Acts as a poly(A)-binding protein that enhances the interaction between heteromeric, adenine-rich transcripts and the exosome. This is DNA primase DnaG from Sulfurisphaera tokodaii (strain DSM 16993 / JCM 10545 / NBRC 100140 / 7) (Sulfolobus tokodaii).